An 83-amino-acid chain; its full sequence is MSCRRLSTSGVLSMSVQNLSKQDVAALTAEDVAQLAQRLENDDYTDAFEGLRDWHLLRAIAFQREDLAEPYLYLLDNETYDEA.

This is an uncharacterized protein from Synechocystis sp. (strain ATCC 27184 / PCC 6803 / Kazusa).